The primary structure comprises 299 residues: Taste receptor type 2 member 50 (299 aa).

Met-1 is a topological domain (extracellular). A helical transmembrane segment spans residues 2–22 (ITFLYIFFSILILVLFVLGNF). The Cytoplasmic portion of the chain corresponds to 23-55 (ANGFIALVNFIDWVKRKKISSADQILTALAVSR). A helical transmembrane segment spans residues 56–76 (IGLLWALLLNWYLTVLNPAFY). Topologically, residues 77–87 (SVELRITSYNA) are extracellular. Residues 88 to 108 (WVVTNHFSMWLAASLSIFYLL) traverse the membrane as a helical segment. Over 109-126 (KIANFSNLIFLHLKRRVR) the chain is Cytoplasmic. A helical transmembrane segment spans residues 127-147 (SVILVILLGTLIFLVCHLLVA). The Extracellular segment spans residues 148–181 (NMDESMWAEEYEGNMTGKMKLRNTVHLSYLTVTT). N-linked (GlcNAc...) asparagine glycosylation occurs at Asn-161. Residues 182–202 (LWSFIPFTLSLISFLMLICSL) traverse the membrane as a helical segment. Residues 203 to 229 (CKHLKKMQLHGEGSQDLSTKVHIKALQ) lie on the Cytoplasmic side of the membrane. Residues 230-250 (TLISFLLLCAIFFLFLIISVW) form a helical membrane-spanning segment. Residues 251–259 (SPRRLQNDP) are Extracellular-facing. A helical transmembrane segment spans residues 260-280 (VVMVSKAVGNIYLAFDSFILI). The Cytoplasmic portion of the chain corresponds to 281 to 299 (WRTKKLKHTFLLILCQIRC).

This sequence belongs to the G-protein coupled receptor T2R family.

It is found in the membrane. Its function is as follows. Receptor that may play a role in the perception of bitterness and is gustducin-linked. May play a role in sensing the chemical composition of the gastrointestinal content. The activity of this receptor may stimulate alpha gustducin, mediate PLC-beta-2 activation and lead to the gating of TRPM5. The polypeptide is Taste receptor type 2 member 50 (TAS2R50) (Gorilla gorilla gorilla (Western lowland gorilla)).